Here is a 410-residue protein sequence, read N- to C-terminus: Tryptophan synthase beta chain (410 aa).

The residue at position 104 (Lys104) is an N6-(pyridoxal phosphate)lysine.

This sequence belongs to the TrpB family. In terms of assembly, tetramer of two alpha and two beta chains. It depends on pyridoxal 5'-phosphate as a cofactor.

The enzyme catalyses (1S,2R)-1-C-(indol-3-yl)glycerol 3-phosphate + L-serine = D-glyceraldehyde 3-phosphate + L-tryptophan + H2O. It participates in amino-acid biosynthesis; L-tryptophan biosynthesis; L-tryptophan from chorismate: step 5/5. The beta subunit is responsible for the synthesis of L-tryptophan from indole and L-serine. The polypeptide is Tryptophan synthase beta chain (Thermosynechococcus vestitus (strain NIES-2133 / IAM M-273 / BP-1)).